The chain runs to 792 residues: Phenylalanine--tRNA ligase beta subunit (792 aa).

Residues 39–154 enclose the tRNA-binding domain; the sequence is LYSFASVITA…EATPLGEDLA (116 aa). The B5 domain maps to 403 to 480; sequence RELKEVALRP…ESWNIETQNP (78 aa). Residues Asp-456, Asp-462, Glu-465, and Glu-466 each coordinate Mg(2+). Residues 695 to 791 form the FDX-ACB domain; the sequence is AIYPSSFRDL…LLTDTKGTIN (97 aa).

This sequence belongs to the phenylalanyl-tRNA synthetase beta subunit family. Type 1 subfamily. As to quaternary structure, tetramer of two alpha and two beta subunits. Requires Mg(2+) as cofactor.

Its subcellular location is the cytoplasm. The enzyme catalyses tRNA(Phe) + L-phenylalanine + ATP = L-phenylalanyl-tRNA(Phe) + AMP + diphosphate + H(+). In Chlamydia pneumoniae (Chlamydophila pneumoniae), this protein is Phenylalanine--tRNA ligase beta subunit (pheT).